Reading from the N-terminus, the 551-residue chain is MKTRHWSVLSLLALPALSQAEAITGEVHRQPLNIEAIVMFVLFVGATLYITYWASKRTRSRGDYYTAGGRITGFQNGLAIAGDFMSAASFLGISALVYTSGYDGLIYSIGFLIGWPIILFLIAERLRNLGRYTFADVASYRLKQRPIRTLSACGSLVVVALYLIAQMVGAGKLIELLFGLNYHVAVVLVGILMVMYVLFGGMLATTWVQIIKAVLLLAGASFMALMVMKSVNFNFNTLFSEAVKVHPKGLSIMSPGGLVSDPISALSLGLALMFGTAGLPHILMRFFTVSDAKEARKSVFYATGFIGYFYILTFIIGFGAILLVGPNPAFKDAAGALLGGNNMAAVHLADAVGGSFFLGFISAVAFATILAVVAGLTLAGASAVSHDLYASVIKKGKANERDELKVSKITVVVLGFVAIGLGILFEKQNIAFMVGLAFSIAASCNFPIIFISMYWEKLTTRGAMIGGWLGLLTAVILMILGPTIWVTILGHAKPIYPYEYPALFSMIVAFVGIWFFSITDNSEEGQQERLRFKAQFVRSQTGLGASQSSSH.

13 helical membrane passes run 34–54 (IEAI…TYWA), 77–97 (GLAI…SALV), 104–124 (GLIY…LIAE), 150–170 (LSAC…MVGA), 184–204 (VAVV…GMLA), 207–227 (WVQI…ALMV), 263–283 (ISAL…PHIL), 304–324 (GFIG…ILLV), 356–376 (FFLG…VAGL), 406–426 (VSKI…ILFE), 430–450 (IAFM…PIIF), 469–489 (LGLL…VTIL), and 498–518 (YEYP…FFSI).

Belongs to the sodium:solute symporter (SSF) (TC 2.A.21) family.

It is found in the cell inner membrane. Functionally, transports acetate. This chain is Cation/acetate symporter ActP, found in Yersinia enterocolitica serotype O:8 / biotype 1B (strain NCTC 13174 / 8081).